A 367-amino-acid chain; its full sequence is 4-hydroxy-3-methylbut-2-en-1-yl diphosphate synthase (flavodoxin) (367 aa).

The [4Fe-4S] cluster site is built by C265, C268, C300, and E307.

The protein belongs to the IspG family. [4Fe-4S] cluster serves as cofactor.

It carries out the reaction (2E)-4-hydroxy-3-methylbut-2-enyl diphosphate + oxidized [flavodoxin] + H2O + 2 H(+) = 2-C-methyl-D-erythritol 2,4-cyclic diphosphate + reduced [flavodoxin]. It functions in the pathway isoprenoid biosynthesis; isopentenyl diphosphate biosynthesis via DXP pathway; isopentenyl diphosphate from 1-deoxy-D-xylulose 5-phosphate: step 5/6. Its function is as follows. Converts 2C-methyl-D-erythritol 2,4-cyclodiphosphate (ME-2,4cPP) into 1-hydroxy-2-methyl-2-(E)-butenyl 4-diphosphate. In Bacillus cereus (strain ATCC 10987 / NRS 248), this protein is 4-hydroxy-3-methylbut-2-en-1-yl diphosphate synthase (flavodoxin).